A 274-amino-acid polypeptide reads, in one-letter code: Undecaprenyl-diphosphatase 1 (274 aa).

7 helical membrane passes run 47–67, 85–105, 113–133, 150–170, 196–216, 225–245, and 253–273; these read QVFL…LYFN, VSMW…GIPF, FYNY…FIMI, ITYT…VFPG, FFLA…KFGL, ILFI…KFLM, and FKAF…YFLI.

The protein belongs to the UppP family.

It is found in the cell membrane. The enzyme catalyses di-trans,octa-cis-undecaprenyl diphosphate + H2O = di-trans,octa-cis-undecaprenyl phosphate + phosphate + H(+). Catalyzes the dephosphorylation of undecaprenyl diphosphate (UPP). Confers resistance to bacitracin. In Clostridium acetobutylicum (strain ATCC 824 / DSM 792 / JCM 1419 / IAM 19013 / LMG 5710 / NBRC 13948 / NRRL B-527 / VKM B-1787 / 2291 / W), this protein is Undecaprenyl-diphosphatase 1.